Reading from the N-terminus, the 376-residue chain is Ribonucleoside-diphosphate reductase 1 subunit beta (376 aa).

The Fe cation site is built by aspartate 85, glutamate 116, and histidine 119. The active site involves tyrosine 123. Fe cation contacts are provided by glutamate 205, glutamate 239, and histidine 242.

The protein belongs to the ribonucleoside diphosphate reductase small chain family. In terms of assembly, tetramer of two alpha (R1) and two beta (R2) subunits. The B1 protein is a dimer of alpha subunits. A radical transfer pathway occurs between Tyr-123 of R2 and R1. The cofactor is Fe cation.

It carries out the reaction a 2'-deoxyribonucleoside 5'-diphosphate + [thioredoxin]-disulfide + H2O = a ribonucleoside 5'-diphosphate + [thioredoxin]-dithiol. Provides the precursors necessary for DNA synthesis. Catalyzes the biosynthesis of deoxyribonucleotides from the corresponding ribonucleotides. R2 contains the tyrosyl radical required for catalysis. The polypeptide is Ribonucleoside-diphosphate reductase 1 subunit beta (nrdB) (Salmonella typhimurium (strain LT2 / SGSC1412 / ATCC 700720)).